Consider the following 281-residue polypeptide: uncharacterized protein (281 aa).

The next 3 helical transmembrane spans lie at Leu23–Ala45, Ile65–Gly87, and Thr94–Ser116.

It belongs to the MscS (TC 1.A.23) family.

It localises to the cell membrane. This is an uncharacterized protein from Buchnera aphidicola subsp. Baizongia pistaciae (strain Bp).